Reading from the N-terminus, the 99-residue chain is MPEISRDEVAHLAKLSRLALTDEELDRFAEQIDGIIGNVSAVQQVAAEGVEPMSHPHSIKTTMREDVVEQILTPEQALDQAPAVDQQRFVVPQILGEQD.

It belongs to the GatC family. As to quaternary structure, heterotrimer of A, B and C subunits.

The catalysed reaction is L-glutamyl-tRNA(Gln) + L-glutamine + ATP + H2O = L-glutaminyl-tRNA(Gln) + L-glutamate + ADP + phosphate + H(+). The enzyme catalyses L-aspartyl-tRNA(Asn) + L-glutamine + ATP + H2O = L-asparaginyl-tRNA(Asn) + L-glutamate + ADP + phosphate + 2 H(+). Its function is as follows. Allows the formation of correctly charged Asn-tRNA(Asn) or Gln-tRNA(Gln) through the transamidation of misacylated Asp-tRNA(Asn) or Glu-tRNA(Gln) in organisms which lack either or both of asparaginyl-tRNA or glutaminyl-tRNA synthetases. The reaction takes place in the presence of glutamine and ATP through an activated phospho-Asp-tRNA(Asn) or phospho-Glu-tRNA(Gln). In Corynebacterium diphtheriae (strain ATCC 700971 / NCTC 13129 / Biotype gravis), this protein is Aspartyl/glutamyl-tRNA(Asn/Gln) amidotransferase subunit C.